Reading from the N-terminus, the 69-residue chain is Microcin H47 immunity protein MchI (69 aa).

The Cytoplasmic portion of the chain corresponds to 1-6 (MSYKKL). Residues 7 to 29 (YQLTAIFSLPLTILLVSLSSLRI) traverse the membrane as a helical segment. Residues 30-38 (VGEGNSYVD) are Periplasmic-facing. Residues 39–61 (VFLSFIIFLGFIELIHGIRKILV) form a helical membrane-spanning segment. Residues 62–69 (WSGWKNGS) are Cytoplasmic-facing.

The protein resides in the cell membrane. In terms of biological role, protects a microcin H47-producer cell against microcin H47. The protein is Microcin H47 immunity protein MchI (mchI) of Escherichia coli.